A 205-amino-acid chain; its full sequence is Cerebellin-3 (205 aa).

A signal peptide spans 1–32; sequence MLGTKRHWPPGPSLSLELPLALTLLALRAGWA. The C1q domain maps to 67 to 205; it reads APPGRVAFAA…SFSGFLIFPL (139 aa). Asn-90 carries N-linked (GlcNAc...) asparagine glycosylation.

As to quaternary structure, heterohexamer; disulfide-linked heterotrimers. Interacts with CBLN1. May also form oligomers with CBLN2 and CBLN4.

It localises to the endoplasmic reticulum. Its subcellular location is the golgi apparatus. The protein resides in the cis-Golgi network. The protein localises to the secreted. It is found in the synapse. May be involved in synaptic functions in the CNS. This is Cerebellin-3 (CBLN3) from Bos taurus (Bovine).